The primary structure comprises 462 residues: L-seryl-tRNA(Sec) selenium transferase (462 aa).

N6-(pyridoxal phosphate)lysine is present on Lys-292.

The protein belongs to the SelA family. Pyridoxal 5'-phosphate serves as cofactor.

Its subcellular location is the cytoplasm. It catalyses the reaction L-seryl-tRNA(Sec) + selenophosphate + H(+) = L-selenocysteinyl-tRNA(Sec) + phosphate. The protein operates within aminoacyl-tRNA biosynthesis; selenocysteinyl-tRNA(Sec) biosynthesis; selenocysteinyl-tRNA(Sec) from L-seryl-tRNA(Sec) (bacterial route): step 1/1. Its function is as follows. Converts seryl-tRNA(Sec) to selenocysteinyl-tRNA(Sec) required for selenoprotein biosynthesis. In Geotalea daltonii (strain DSM 22248 / JCM 15807 / FRC-32) (Geobacter daltonii), this protein is L-seryl-tRNA(Sec) selenium transferase.